Here is a 712-residue protein sequence, read N- to C-terminus: Ribosomal RNA large subunit methyltransferase K/L (712 aa).

Positions 46 to 157 constitute a THUMP domain; the sequence is GAYQALLHSR…REKLIVSLDL (112 aa).

Belongs to the methyltransferase superfamily. RlmKL family.

Its subcellular location is the cytoplasm. It catalyses the reaction guanosine(2445) in 23S rRNA + S-adenosyl-L-methionine = N(2)-methylguanosine(2445) in 23S rRNA + S-adenosyl-L-homocysteine + H(+). It carries out the reaction guanosine(2069) in 23S rRNA + S-adenosyl-L-methionine = N(2)-methylguanosine(2069) in 23S rRNA + S-adenosyl-L-homocysteine + H(+). In terms of biological role, specifically methylates the guanine in position 2445 (m2G2445) and the guanine in position 2069 (m7G2069) of 23S rRNA. The chain is Ribosomal RNA large subunit methyltransferase K/L from Haemophilus ducreyi (strain 35000HP / ATCC 700724).